We begin with the raw amino-acid sequence, 164 residues long: uncharacterized protein (164 aa).

2 consecutive transmembrane segments (helical) span residues 11–31 and 51–71; these read FYVNGFFSFLFLFLFLFPSLL and CQQYSSLAIFTASGFWLLVLV.

It localises to the membrane. This is an uncharacterized protein from Saccharomyces cerevisiae (strain ATCC 204508 / S288c) (Baker's yeast).